Here is a 718-residue protein sequence, read N- to C-terminus: Exostosin-2 (718 aa).

The Cytoplasmic portion of the chain corresponds to 1 to 25 (MCASVKYNIRGPALIPRMKTKHRIY). A helical; Signal-anchor for type II membrane protein transmembrane segment spans residues 26 to 46 (YITLFSIVLLGLIATGMFQFW). At 47-718 (PHSIESSNDW…LKSFPNIGSL (672 aa)) the chain is on the lumenal side. 4 disulfide bridges follow: cysteine 85/cysteine 90, cysteine 96/cysteine 151, cysteine 286/cysteine 300, and cysteine 318/cysteine 339. A glycan (N-linked (GlcNAc...) asparagine) is linked at asparagine 288. Positions 461, 465, 490, and 517 each coordinate UDP. Arginine 465, asparagine 490, asparagine 517, arginine 522, aspartate 538, aspartate 539, and aspartate 540 together coordinate UDP-N-acetyl-alpha-D-glucosamine. UDP-binding residues include aspartate 538 and aspartate 539. A Mn(2+)-binding site is contributed by aspartate 540. 2 residues coordinate a protein: tyrosine 582 and serine 584. A disulfide bond links cysteine 626 and cysteine 676. Glutamate 627 and aspartate 628 together coordinate UDP-N-acetyl-alpha-D-glucosamine. Residue asparagine 637 is glycosylated (N-linked (GlcNAc...) asparagine). Residues lysine 651 and lysine 653 each contribute to the a protein site. Arginine 673 is a UDP-N-acetyl-alpha-D-glucosamine binding site.

Belongs to the glycosyltransferase 47 family. Part of the heparan sulfate polymerase, a dimeric complex composed of EXT1 and EXT2. Could also form homooligomeric complexes. Interacts with NDST1. Interacts with GALNT5. Requires Mn(2+) as cofactor. In terms of processing, N-glycosylated at Asn-637. Post-translationally, a soluble form is generated by proteolytic processing. As to expression, widely expressed.

It localises to the golgi apparatus membrane. It is found in the golgi apparatus. Its subcellular location is the cis-Golgi network membrane. The protein localises to the endoplasmic reticulum membrane. The protein resides in the secreted. The catalysed reaction is 3-O-{[(1-&gt;4)-beta-D-GlcA-(1-&gt;4)-alpha-D-GlcNAc](n)-(1-&gt;4)-beta-D-GlcA-(1-&gt;3)-beta-D-Gal-(1-&gt;3)-beta-D-Gal-(1-&gt;4)-beta-D-Xyl}-L-seryl-[protein] + UDP-N-acetyl-alpha-D-glucosamine = 3-O-{alpha-D-GlcNAc-[(1-&gt;4)-beta-D-GlcA-(1-&gt;4)-alpha-D-GlcNAc](n)-(1-&gt;4)-beta-D-GlcA-(1-&gt;3)-beta-D-Gal-(1-&gt;3)-beta-D-Gal-(1-&gt;4)-beta-D-Xyl}-L-seryl-[protein] + UDP + H(+). The protein operates within protein modification; protein glycosylation. In terms of biological role, glycosyltransferase forming with EXT1 the heterodimeric heparan sulfate polymerase which catalyzes the elongation of the heparan sulfate glycan backbone. Glycan backbone extension consists in the alternating transfer of (1-&gt;4)-beta-D-GlcA and (1-&gt;4)-alpha-D-GlcNAc residues from their respective UDP-sugar donors. Both EXT1 and EXT2 are required for the full activity of the polymerase since EXT1 bears the N-acetylglucosaminyl-proteoglycan 4-beta-glucuronosyltransferase activity within the complex while EXT2 carries the glucuronosyl-N-acetylglucosaminyl-proteoglycan 4-alpha-N-acetylglucosaminyltransferase activity. Heparan sulfate proteoglycans are ubiquitous components of the extracellular matrix and play an important role in tissue homeostasis and signaling. The polypeptide is Exostosin-2 (Homo sapiens (Human)).